Reading from the N-terminus, the 99-residue chain is Small ribosomal subunit protein bS20 (99 aa).

The protein belongs to the bacterial ribosomal protein bS20 family.

Binds directly to 16S ribosomal RNA. The protein is Small ribosomal subunit protein bS20 of Caldicellulosiruptor bescii (strain ATCC BAA-1888 / DSM 6725 / KCTC 15123 / Z-1320) (Anaerocellum thermophilum).